Here is a 497-residue protein sequence, read N- to C-terminus: Cytochrome P450 71A14 (497 aa).

The helical transmembrane segment at 3–23 (MIIISLCLATILALLLLKQFL) threads the bilayer. Cys440 provides a ligand contact to heme.

Belongs to the cytochrome P450 family. Heme serves as cofactor.

The protein localises to the membrane. The sequence is that of Cytochrome P450 71A14 (CYP71A14) from Arabidopsis thaliana (Mouse-ear cress).